We begin with the raw amino-acid sequence, 176 residues long: Translation initiation factor IF-3 (176 aa).

The protein belongs to the IF-3 family. As to quaternary structure, monomer.

It localises to the cytoplasm. Its function is as follows. IF-3 binds to the 30S ribosomal subunit and shifts the equilibrium between 70S ribosomes and their 50S and 30S subunits in favor of the free subunits, thus enhancing the availability of 30S subunits on which protein synthesis initiation begins. This is Translation initiation factor IF-3 from Microcystis aeruginosa (strain NIES-843 / IAM M-2473).